The primary structure comprises 529 residues: Peptide chain release factor 3 (529 aa).

Positions 11 to 280 constitute a tr-type G domain; it reads NKRRTFAIIS…GLTEWAPKPQ (270 aa). Residues 20–27, 88–92, and 142–145 contribute to the GTP site; these read SHPDAGKT, DTPGH, and NKLD.

This sequence belongs to the TRAFAC class translation factor GTPase superfamily. Classic translation factor GTPase family. PrfC subfamily.

The protein localises to the cytoplasm. Increases the formation of ribosomal termination complexes and stimulates activities of RF-1 and RF-2. It binds guanine nucleotides and has strong preference for UGA stop codons. It may interact directly with the ribosome. The stimulation of RF-1 and RF-2 is significantly reduced by GTP and GDP, but not by GMP. This chain is Peptide chain release factor 3, found in Mannheimia succiniciproducens (strain KCTC 0769BP / MBEL55E).